A 130-amino-acid chain; its full sequence is Protein NrdI (130 aa).

It belongs to the NrdI family.

In terms of biological role, probably involved in ribonucleotide reductase function. This chain is Protein NrdI, found in Bacillus velezensis (strain DSM 23117 / BGSC 10A6 / LMG 26770 / FZB42) (Bacillus amyloliquefaciens subsp. plantarum).